A 260-amino-acid chain; its full sequence is Flavin-dependent thymidylate synthase (260 aa).

The ThyX domain occupies 2–203 (ISVKLVSYTN…PRLFKYTGPN (202 aa)). Residues serine 56, 80 to 82 (RHR), and glutamine 88 contribute to the FAD site. Residues 77–80 (QLVR), 88–92 (QMSHR), and arginine 142 each bind dUMP. A ThyX motif motif is present at residues 80–90 (RHRIASYTQMS). Residues 158–160 (NAR) and asparagine 164 each bind FAD. Arginine 169 is a binding site for dUMP. Catalysis depends on arginine 169, which acts as the Involved in ionization of N3 of dUMP, leading to its activation.

Belongs to the thymidylate synthase ThyX family. Homotetramer. FAD serves as cofactor.

The catalysed reaction is dUMP + (6R)-5,10-methylene-5,6,7,8-tetrahydrofolate + NADPH + H(+) = dTMP + (6S)-5,6,7,8-tetrahydrofolate + NADP(+). It functions in the pathway pyrimidine metabolism; dTTP biosynthesis. Its function is as follows. Catalyzes the reductive methylation of 2'-deoxyuridine-5'-monophosphate (dUMP) to 2'-deoxythymidine-5'-monophosphate (dTMP) while utilizing 5,10-methylenetetrahydrofolate (mTHF) as the methyl donor, and NADPH and FADH(2) as the reductant. This Saccharolobus solfataricus (strain ATCC 35092 / DSM 1617 / JCM 11322 / P2) (Sulfolobus solfataricus) protein is Flavin-dependent thymidylate synthase.